Consider the following 358-residue polypeptide: Biotin synthase (358 aa).

One can recognise a Radical SAM core domain in the interval 44–272 (NRVRLNYLVN…DSEVRAAAGR (229 aa)). Residues cysteine 59, cysteine 63, and cysteine 66 each contribute to the [4Fe-4S] cluster site. Positions 103, 136, 196, and 267 each coordinate [2Fe-2S] cluster.

It belongs to the radical SAM superfamily. Biotin synthase family. In terms of assembly, homodimer. It depends on [4Fe-4S] cluster as a cofactor. [2Fe-2S] cluster is required as a cofactor.

The catalysed reaction is (4R,5S)-dethiobiotin + (sulfur carrier)-SH + 2 reduced [2Fe-2S]-[ferredoxin] + 2 S-adenosyl-L-methionine = (sulfur carrier)-H + biotin + 2 5'-deoxyadenosine + 2 L-methionine + 2 oxidized [2Fe-2S]-[ferredoxin]. It functions in the pathway cofactor biosynthesis; biotin biosynthesis; biotin from 7,8-diaminononanoate: step 2/2. Catalyzes the conversion of dethiobiotin (DTB) to biotin by the insertion of a sulfur atom into dethiobiotin via a radical-based mechanism. The protein is Biotin synthase of Cutibacterium acnes (strain DSM 16379 / KPA171202) (Propionibacterium acnes).